A 503-amino-acid polypeptide reads, in one-letter code: Na(+)-translocating NADH-quinone reductase subunit B (503 aa).

The next 5 helical transmembrane spans lie at 55-75 (MMLV…NSGL), 94-114 (ISGF…VPIL), 120-140 (IFIP…VLFA), 161-181 (TLPP…GIVV), and 186-206 (FGGT…FLFF). At Thr248 the chain carries FMN phosphoryl threonine. The next 5 helical transmembrane spans lie at 361–381 (TSTF…IASW), 386–406 (AFGI…VLIV), 417–437 (FFIP…LVFM), 452–472 (WIYG…NPAY), and 475–495 (GVML…YFAV).

This sequence belongs to the NqrB/RnfD family. In terms of assembly, composed of six subunits; NqrA, NqrB, NqrC, NqrD, NqrE and NqrF. FMN is required as a cofactor.

The protein localises to the cell inner membrane. It carries out the reaction a ubiquinone + n Na(+)(in) + NADH + H(+) = a ubiquinol + n Na(+)(out) + NAD(+). NQR complex catalyzes the reduction of ubiquinone-1 to ubiquinol by two successive reactions, coupled with the transport of Na(+) ions from the cytoplasm to the periplasm. NqrA to NqrE are probably involved in the second step, the conversion of ubisemiquinone to ubiquinol. In Chlamydia pneumoniae (Chlamydophila pneumoniae), this protein is Na(+)-translocating NADH-quinone reductase subunit B.